Consider the following 1096-residue polypeptide: Lysine-specific demethylase 4B (1096 aa).

The JmjN domain maps to 15 to 57 (IMTFRPTMEEFKDFNKYVAYIESQGAHRAGLAKIIPPKEWKPR). Tyrosine 133 is a 2-oxoglutarate binding site. The region spanning 146-309 (VAQWNIGSLR…YGKVATQCTC (164 aa)) is the JmjC domain. Fe cation contacts are provided by histidine 189 and glutamate 191. Residues asparagine 199 and lysine 207 each coordinate 2-oxoglutarate. Cysteine 235 and histidine 241 together coordinate Zn(2+). Residue lysine 242 participates in 2-oxoglutarate binding. Histidine 277 contacts Fe cation. Cysteine 307 and cysteine 309 together coordinate Zn(2+). Residues 369 to 382 (LLRRSHRKRSQPKK) show a composition bias toward basic residues. Disordered stretches follow at residues 369-478 (LLRR…SEEA) and 557-649 (KGPT…VSDP). The segment covering 391-406 (PGEGTAGAALLEEAGG) has biased composition (low complexity). The span at 413 to 425 (GPEVDPEEEEEEP) shows a compositional bias: acidic residues. The segment covering 430–443 (HGREAEGAEEDGRG) has biased composition (basic and acidic residues). Residues 444-458 (KLRPTKAKSERKKKS) are compositionally biased toward basic residues. Serine 566 is subject to Phosphoserine. Lysine 602 bears the N6-acetyllysine mark. Residues 632 to 648 (SSDEEASPFSGEEDVSD) are compositionally biased toward acidic residues. A PHD-type 1 zinc finger spans residues 731-789 (MCFTSGGENTEPLPANSYIGDDGTSPLIACGKCCLQVHASCYGIRPELVNEGWTCSRCA). A C2HC pre-PHD-type zinc finger spans residues 794-827 (TAECCLCNLRGGALQMTTDRRWIHVICAIAVPEA). A PHD-type 2 zinc finger spans residues 850 to 907 (LKCVYCRKRMKKVSGACIQCSYEHCSTSFHVTCAHAAGVLMEPDDWPYVVSITCLKHK). Tudor domains follow at residues 917 to 974 (RAVS…CVQL) and 975 to 1031 (GPPS…EELP). The tract at residues 1037–1073 (RLSLSTGAPQEPAFSGEEAKAAKRPRVGTPLATEDSG) is disordered. Threonine 1065 is subject to Phosphothreonine.

Belongs to the JHDM3 histone demethylase family. It depends on Fe(2+) as a cofactor.

It is found in the nucleus. It catalyses the reaction N(6),N(6),N(6)-trimethyl-L-lysyl(9)-[histone H3] + 2 2-oxoglutarate + 2 O2 = N(6)-methyl-L-lysyl(9)-[histone H3] + 2 formaldehyde + 2 succinate + 2 CO2. Histone demethylase that specifically demethylates 'Lys-9' of histone H3, thereby playing a role in histone code. Does not demethylate histone H3 'Lys-4', H3 'Lys-27', H3 'Lys-36' nor H4 'Lys-20'. Only able to demethylate trimethylated H3 'Lys-9', with a weaker activity than KDM4A, KDM4C and KDM4D. Demethylation of Lys residue generates formaldehyde and succinate. Plays a critical role in the development of the central nervous system (CNS). In Homo sapiens (Human), this protein is Lysine-specific demethylase 4B (KDM4B).